The sequence spans 524 residues: Translation initiation factor eIF2B subunit delta (524 aa).

A disordered region spans residues 1–155 (MAAVAVAVRE…EHTPADDPTL (155 aa)). Residue Ala2 is modified to N-acetylalanine. Basic and acidic residues-rich tracts occupy residues 8-20 (VREE…KTEL) and 31-40 (LTQEEKLQLR). The residue at position 12 (Ser12) is a Phosphoserine. The segment covering 41 to 51 (KEKKQQKKKRK) has biased composition (basic residues). A Phosphothreonine modification is found at Thr86. Positions 96–121 (SKAELRAERRAKQEAERALKQARKGE) are enriched in basic and acidic residues. Residues 130-140 (CPSTAGETTSG) show a composition bias toward polar residues. Residues 171-180 (RKDYGSKVSL) are may bind the chemical integrated stress response (ISR) inhibitor ISRIB.

The protein belongs to the eIF-2B alpha/beta/delta subunits family. In terms of assembly, component of the translation initiation factor 2B (eIF2B) complex which is a heterodecamer of two sets of five different subunits: alpha, beta, gamma, delta and epsilon. Subunits alpha, beta and delta comprise a regulatory subcomplex and subunits epsilon and gamma comprise a catalytic subcomplex. Within the complex, the hexameric regulatory complex resides at the center, with the two heterodimeric catalytic subcomplexes bound on opposite sides.

Its subcellular location is the cytoplasm. It localises to the cytosol. Activated by the chemical integrated stress response (ISR) inhibitor ISRIB which stimulates guanine nucleotide exchange factor activity for both phosphorylated and unphosphorylated eIF2. Functionally, acts as a component of the translation initiation factor 2B (eIF2B) complex, which catalyzes the exchange of GDP for GTP on eukaryotic initiation factor 2 (eIF2) gamma subunit. Its guanine nucleotide exchange factor activity is repressed when bound to eIF2 complex phosphorylated on the alpha subunit, thereby limiting the amount of methionyl-initiator methionine tRNA available to the ribosome and consequently global translation is repressed. This is Translation initiation factor eIF2B subunit delta (Eif2b4) from Mus musculus (Mouse).